The following is a 378-amino-acid chain: Transmembrane protein adipocyte-associated 1 homolog (378 aa).

N-linked (GlcNAc...) asparagine glycosylation is found at Asn-16, Asn-25, and Asn-36. 7 consecutive transmembrane segments (helical) span residues 61–81 (VMLL…LPSA), 88–108 (TSSP…AVGI), 136–156 (FFLL…GHLE), 164–184 (VLAI…TLEI), 205–225 (HFWL…VILP), 247–267 (ILAL…ADII), and 278–298 (FLYF…GFFG). The disordered stretch occupies residues 316 to 335 (DSDVHLPHTSSSGLGRKDLD).

It belongs to the UPF0359 family.

The protein resides in the membrane. This is Transmembrane protein adipocyte-associated 1 homolog (tpra1) from Danio rerio (Zebrafish).